Reading from the N-terminus, the 254-residue chain is Attacin-A (254 aa).

Positions 1-18 (MFTYKLILGLVLVVSASA) are cleaved as a signal peptide. Positions 19-62 (RYLVFEDLEGESYLVPNQAEDEQVLEGEPFYENAVQLASPRVRR) are excised as a propeptide.

The protein belongs to the attacin/sarcotoxin-2 family.

The protein resides in the secreted. Hemolymph antibacterial protein. The polypeptide is Attacin-A (Trichoplusia ni (Cabbage looper)).